Consider the following 341-residue polypeptide: Fructose-1,6-bisphosphatase, cytosolic (341 aa).

The Mg(2+) site is built by Glu71, Glu100, Asp121, Leu123, and Asp124. Residues 124-127, Asn215, Tyr247, Tyr267, and Lys277 contribute to the substrate site; that span reads DGSF. A Mg(2+)-binding site is contributed by Glu283.

This sequence belongs to the FBPase class 1 family. Mg(2+) serves as cofactor.

The protein resides in the cytoplasm. It catalyses the reaction beta-D-fructose 1,6-bisphosphate + H2O = beta-D-fructose 6-phosphate + phosphate. This is Fructose-1,6-bisphosphatase, cytosolic from Pisum sativum (Garden pea).